Consider the following 245-residue polypeptide: tRNA (guanine-N(1)-)-methyltransferase (245 aa).

Residues glycine 111 and 131-136 contribute to the S-adenosyl-L-methionine site; that span reads MGDYVL.

It belongs to the RNA methyltransferase TrmD family. Homodimer.

The protein localises to the cytoplasm. The catalysed reaction is guanosine(37) in tRNA + S-adenosyl-L-methionine = N(1)-methylguanosine(37) in tRNA + S-adenosyl-L-homocysteine + H(+). Specifically methylates guanosine-37 in various tRNAs. In Staphylococcus epidermidis (strain ATCC 35984 / DSM 28319 / BCRC 17069 / CCUG 31568 / BM 3577 / RP62A), this protein is tRNA (guanine-N(1)-)-methyltransferase.